The following is a 145-amino-acid chain: 3-hydroxyacyl-[acyl-carrier-protein] dehydratase FabZ (145 aa).

The active site involves His51.

It belongs to the thioester dehydratase family. FabZ subfamily.

Its subcellular location is the cytoplasm. The catalysed reaction is a (3R)-hydroxyacyl-[ACP] = a (2E)-enoyl-[ACP] + H2O. In terms of biological role, involved in unsaturated fatty acids biosynthesis. Catalyzes the dehydration of short chain beta-hydroxyacyl-ACPs and long chain saturated and unsaturated beta-hydroxyacyl-ACPs. The sequence is that of 3-hydroxyacyl-[acyl-carrier-protein] dehydratase FabZ from Staphylococcus carnosus (strain TM300).